The following is a 488-amino-acid chain: Ribulose bisphosphate carboxylase large chain (488 aa).

2 residues coordinate substrate: Asn-127 and Thr-177. Lys-179 functions as the Proton acceptor in the catalytic mechanism. Residue Lys-181 participates in substrate binding. Lys-205, Asp-207, and Glu-208 together coordinate Mg(2+). An N6-carboxylysine modification is found at Lys-205. Catalysis depends on His-297, which acts as the Proton acceptor. Positions 298, 330, and 382 each coordinate substrate.

Belongs to the RuBisCO large chain family. Type I subfamily. As to quaternary structure, heterohexadecamer of 8 large chains and 8 small chains. Mg(2+) is required as a cofactor.

The protein resides in the plastid. The protein localises to the chloroplast. It carries out the reaction 2 (2R)-3-phosphoglycerate + 2 H(+) = D-ribulose 1,5-bisphosphate + CO2 + H2O. The enzyme catalyses D-ribulose 1,5-bisphosphate + O2 = 2-phosphoglycolate + (2R)-3-phosphoglycerate + 2 H(+). RuBisCO catalyzes two reactions: the carboxylation of D-ribulose 1,5-bisphosphate, the primary event in carbon dioxide fixation, as well as the oxidative fragmentation of the pentose substrate in the photorespiration process. Both reactions occur simultaneously and in competition at the same active site. The sequence is that of Ribulose bisphosphate carboxylase large chain from Ectocarpus siliculosus (Brown alga).